The following is a 1005-amino-acid chain: Pikachurin (1005 aa).

An N-terminal signal peptide occupies residues 1-24; sequence MDLISTFLLHFLLLACSLPPGAVS. 2 Fibronectin type-III domains span residues 37–136 and 144–239; these read PPLD…TLSQ and APHQ…TLGP. A glycan (N-linked (GlcNAc...) asparagine) is linked at asparagine 47. The interval 281–328 is disordered; sequence PATKVGNKKSKKTSVSNSEMDSRLAQPTSASLPETTVAVPPTPAQRKG. Over residues 305–314 the composition is skewed to polar residues; the sequence is AQPTSASLPE. The 39-residue stretch at 339–377 folds into the EGF-like 1 domain; sequence FDMSCDETLCSADSFCVNDYAWGGSRCHCNLGKGGEACS. Disulfide bonds link cysteine 343/cysteine 354, cysteine 348/cysteine 365, cysteine 367/cysteine 376, cysteine 530/cysteine 560, cysteine 565/cysteine 576, cysteine 570/cysteine 586, cysteine 588/cysteine 597, cysteine 784/cysteine 795, cysteine 789/cysteine 804, cysteine 806/cysteine 815, and cysteine 975/cysteine 1002. Residues 382–560 form the Laminin G-like 1 domain; it reads IQYPQFFGHS…ALNGADVGEC (179 aa). 2 EGF-like domains span residues 561-598 and 780-816; these read SSGICDEASCINGGTCAAIKADSYICLCPLGFRGRHCE and AAHPCVGAPCAHGGSCRPRKEGYECDCPLGFEGLNCQ. The 180-residue stretch at 605 to 784 folds into the Laminin G-like 2 domain; it reads IPQFRESLRS…VNVENAAHPC (180 aa). In terms of domain architecture, Laminin G-like 3 spans 823-1002; the sequence is IEIPQFIGRS…AVDGKNINTC (180 aa).

Interacts with DAG1 alpha-dystroglycan. Interacts with GPR158 and GPR179; transsynaptic interaction is required for synaptic organization of photoreceptor cells. O-glycosylated; contains chondroitin sulfate and heparan sulfate.

The protein resides in the secreted. It is found in the extracellular space. It localises to the extracellular matrix. Its subcellular location is the synaptic cleft. The protein localises to the presynaptic active zone. In terms of biological role, involved in both the retinal photoreceptor ribbon synapse formation and physiological functions of visual perception. Plays a key role in the synaptic organization of photoreceptors by mediating transsynaptic interaction between alpha-dystroglycan and GPR179 on the postsynaptic membrane. Necessary for proper bipolar dendritic tip apposition to the photoreceptor ribbon synapse. Promotes matrix assembly and cell adhesiveness. In Rattus norvegicus (Rat), this protein is Pikachurin (Egflam).